A 360-amino-acid chain; its full sequence is Decorin (360 aa).

The signal sequence occupies residues 1–16 (MTATLILLLLAQVSWA). Residues 17–30 (GPFQQRGLFDFMLE) constitute a propeptide that is removed on maturation. The O-linked (Xyl...) (glycosaminoglycan) serine glycan is linked to Ser34. Disulfide bonds link Cys55–Cys61 and Cys59–Cys68. 12 LRR repeats span residues 74–94 (DKVP…NNKI), 95–118 (TEIK…NNKI), 119–142 (SKIS…KNHL), 143–163 (KELP…ENEI), 164–187 (TKVR…TNPL), 188–213 (KSSG…DTNI), 214–234 (TTIP…GNKI), 235–258 (TKID…FNDI), 259–282 (SAVD…NNKL), 283–305 (IRVP…NNNI), 306–335 (SVVG…SNPV), and 336–360 (QYWE…GNYK). N-linked (GlcNAc...) asparagine glycosylation occurs at Asn212. Asn263 and Asn304 each carry an N-linked (GlcNAc...) asparagine glycan. A disulfide bridge links Cys314 with Cys347.

It belongs to the small leucine-rich proteoglycan (SLRP) family. SLRP class I subfamily. Binds to type I and type II collagen, fibronectin and TGF-beta. Forms a ternary complex with MFAP2 and ELN. Interacts with DPT. The attached glycosaminoglycan chain can be either chondroitin sulfate or dermatan sulfate depending upon the tissue of origin.

The protein localises to the secreted. It localises to the extracellular space. It is found in the extracellular matrix. Its function is as follows. May affect the rate of fibrils formation. The sequence is that of Decorin (DCN) from Oryctolagus cuniculus (Rabbit).